The sequence spans 367 residues: Dimethyladenosine transferase 1, mitochondrial (367 aa).

The transit peptide at 1-16 (MASASRLPPLPALRDF) directs the protein to the mitochondrion. Residues 30-33 (QNYL), N31, L33, G58, E80, D106, and N141 contribute to the S-adenosyl-L-methionine site.

Belongs to the class I-like SAM-binding methyltransferase superfamily. rRNA adenine N(6)-methyltransferase family. KsgA subfamily.

Its subcellular location is the mitochondrion. Its function is as follows. Probable S-adenosyl-L-methionine-dependent methyltransferase which specifically dimethylates mitochondrial 12S rRNA at the conserved stem loop. Also required for basal transcription of mitochondrial DNA. Stimulates transcription independently of the methyltransferase activity. In Caenorhabditis elegans, this protein is Dimethyladenosine transferase 1, mitochondrial (tfbm-1).